Reading from the N-terminus, the 344-residue chain is KRR1 small subunit processome component homolog (344 aa).

Residues 126-194 (DIIKIGNLVH…VRDIVLDTMN (69 aa)) enclose the KH domain. Residues 230–246 (KNKNISKRKQPKNKKPK) are compositionally biased toward basic residues. Residues 230–326 (KNKNISKRKQ…KRAAEDNKVD (97 aa)) are disordered. The stretch at 271 to 344 (FLNKEQKQAK…MKANKKKERS (74 aa)) forms a coiled coil. Basic and acidic residues predominate over residues 272-303 (LNKEQKQAKRQQERTAKQAEAAKKQDERRNKD).

The protein belongs to the KRR1 family. As to quaternary structure, monomer. Component of the ribosomal small subunit (SSU) processome.

The protein resides in the nucleus. Its subcellular location is the nucleolus. Functionally, required for 40S ribosome biogenesis. Involved in nucleolar processing of pre-18S ribosomal RNA and ribosome assembly. Binds to RNA. Required for female germline development, cell viability during eye development and for survival of dividing cells and epithelial cells during early wing disk development. The sequence is that of KRR1 small subunit processome component homolog from Drosophila mojavensis (Fruit fly).